A 208-amino-acid chain; its full sequence is Ribosomal RNA large subunit methyltransferase E (208 aa).

S-adenosyl-L-methionine is bound by residues Gly-63, Trp-65, Asp-83, Asp-99, and Asp-124. Lys-164 acts as the Proton acceptor in catalysis.

This sequence belongs to the class I-like SAM-binding methyltransferase superfamily. RNA methyltransferase RlmE family.

The protein resides in the cytoplasm. It catalyses the reaction uridine(2552) in 23S rRNA + S-adenosyl-L-methionine = 2'-O-methyluridine(2552) in 23S rRNA + S-adenosyl-L-homocysteine + H(+). Functionally, specifically methylates the uridine in position 2552 of 23S rRNA at the 2'-O position of the ribose in the fully assembled 50S ribosomal subunit. The sequence is that of Ribosomal RNA large subunit methyltransferase E from Blochmanniella pennsylvanica (strain BPEN).